The following is a 324-amino-acid chain: UDP-N-acetylenolpyruvoylglucosamine reductase (324 aa).

An FAD-binding PCMH-type domain is found at A38 to K231. Residue R195 is part of the active site. Catalysis depends on S246, which acts as the Proton donor. E316 is a catalytic residue.

It belongs to the MurB family. Requires FAD as cofactor.

The protein resides in the cytoplasm. The enzyme catalyses UDP-N-acetyl-alpha-D-muramate + NADP(+) = UDP-N-acetyl-3-O-(1-carboxyvinyl)-alpha-D-glucosamine + NADPH + H(+). Its pathway is cell wall biogenesis; peptidoglycan biosynthesis. Its function is as follows. Cell wall formation. In Thiobacillus denitrificans (strain ATCC 25259 / T1), this protein is UDP-N-acetylenolpyruvoylglucosamine reductase.